A 155-amino-acid polypeptide reads, in one-letter code: Microsomal glutathione S-transferase 1 (155 aa).

The Lumenal portion of the chain corresponds to 3 to 9 (DLTQVMD). A helical transmembrane segment spans residues 10 to 33 (DEVFMAFASYATIILSKMMLMSTA). Over 34-62 (TAFYRLTRKVFANPEDCVAFGKGENAKKY) the chain is Cytoplasmic. Residue Arg-38 participates in glutathione binding. N6-acetyllysine occurs at positions 42, 55, and 60. Residues 63–96 (LRTDDRVERVRRAHLNDLENIIPFLGIGLLYSLS) form a helical membrane-spanning segment. Glutathione-binding residues include Arg-73, Arg-74, His-76, and Glu-81. At 97-99 (GPD) the chain is on the lumenal side. Residues 100 to 123 (PSTAILHFRLFVGARIYHTIAYLT) traverse the membrane as a helical segment. Position 121 (Tyr-121) interacts with glutathione. The Cytoplasmic segment spans residues 124–128 (PLPQP). A helical membrane pass occupies residues 129 to 148 (NRALSFFVGYGVTLSMAYRL). Residues 149–155 (LKSKLYL) are Lumenal-facing.

This sequence belongs to the MAPEG family. In terms of assembly, homotrimer; The trimer binds only one molecule of glutathione. As to expression, highly expressed in liver.

It is found in the endoplasmic reticulum membrane. The protein resides in the mitochondrion outer membrane. The enzyme catalyses RX + glutathione = an S-substituted glutathione + a halide anion + H(+). Conjugation of reduced glutathione to a wide number of exogenous and endogenous hydrophobic electrophiles. The protein is Microsomal glutathione S-transferase 1 (MGST1) of Homo sapiens (Human).